The chain runs to 513 residues: 2-isopropylmalate synthase (513 aa).

One can recognise a Pyruvate carboxyltransferase domain in the interval 4 to 266 (IEFFDTSLRD…KSPLVLAETM (263 aa)). Mn(2+)-binding residues include aspartate 13, histidine 201, histidine 203, and asparagine 237. Residues 390 to 513 (ILNNVQIDGH…VEQISAHDGI (124 aa)) form a regulatory domain region.

The protein belongs to the alpha-IPM synthase/homocitrate synthase family. LeuA type 1 subfamily. In terms of assembly, homodimer. It depends on Mn(2+) as a cofactor.

It is found in the cytoplasm. It carries out the reaction 3-methyl-2-oxobutanoate + acetyl-CoA + H2O = (2S)-2-isopropylmalate + CoA + H(+). Its pathway is amino-acid biosynthesis; L-leucine biosynthesis; L-leucine from 3-methyl-2-oxobutanoate: step 1/4. Functionally, catalyzes the condensation of the acetyl group of acetyl-CoA with 3-methyl-2-oxobutanoate (2-ketoisovalerate) to form 3-carboxy-3-hydroxy-4-methylpentanoate (2-isopropylmalate). The sequence is that of 2-isopropylmalate synthase from Lactococcus lactis subsp. cremoris (strain SK11).